Here is a 109-residue protein sequence, read N- to C-terminus: Ribonuclease P protein component 2 (109 aa).

It belongs to the eukaryotic/archaeal RNase P protein component 2 family. In terms of assembly, consists of a catalytic RNA component and at least 4-5 protein subunits.

It localises to the cytoplasm. It carries out the reaction Endonucleolytic cleavage of RNA, removing 5'-extranucleotides from tRNA precursor.. Part of ribonuclease P, a protein complex that generates mature tRNA molecules by cleaving their 5'-ends. The chain is Ribonuclease P protein component 2 from Archaeoglobus fulgidus (strain ATCC 49558 / DSM 4304 / JCM 9628 / NBRC 100126 / VC-16).